A 2535-amino-acid polypeptide reads, in one-letter code: MEPHVLGAGLYWLLLPCTLLAASLLRFNALSLVYLLFLLLLPWLPGPSRHSIPGHTGRLLRALLCLSLLFLVAHVAFQICLHTMPRLNQLLGQNCNLWANVSQHIGVTRLDLKDIFNTTRLVAPDLGVLVASSLCLGLCGRLTRKARQSQRTQELEEDDIDAAPAAGLQGAPTLATKRRLWLAPRFRITAHWLLVTSGRMLVIVLLALAGIAHPSAFSSVYLMVFLAICTWWSCHFPLSSLGFNTLCVMVSCFGAGHLVCLYCYQTPFVQSVLLPGSLWARLFGLKNFVDIPNCSSPNVLVLNTKHAWPIYVSPGILLLLYYTATSLLKLRKGRFSELRKEIPREDEEHELELDQLEPEPQARGTTQGATPTTTGPDIDNCTVHVLTSQSPVRQRPVRPRLAELKEMSPLHGLGHLILDQSYVCALIAMMVWSIMYHSWLTFVLLLWACLIWTVRSRHQLAMLCSPCILLYGLTLCCLRYVWAMELPELPTTLGPVSLHQLGLEHTRYPCLDLGAMLLYLLTFWLLLRQFVKEKLLKKRKAPSTLLEVTVSDTEPTQTQTLLRSLGELVTGIYVKYWIYVCAGMFIVVSFAGRLVVYKIVYMFLFLLCLTLFQVYYTLWRKLLRVFWWLVVAYTMLVLIAVYTFQFQDFPTYWRNLTGFTDEQLGDLGLEQFSVSELFSSILIPGFFLLACILQLHYFHRPFMQLTDLEHVPPPGTRRLRWAHRQDTVSEAPLLQHQEEEEVFRDDGQSMDGPHQTTQVPEGTASKWGLVADRLLDLASSFSAVLTRIQVFVRCLLELHVFKLVALYTVWVALKEVSVMNLLLVVLWAFALPYPRFRPMASCLSTVWTCIIIVCKMLYQLKIVNPHEYSSNCTEPFPNNTNLQPLEISQSLLYRGPVDPANWFGVRKGYPNLGYIQNHLQILLLLVFEAVVYRRQEHYRRQHQQAPLPAQALCADGTRQRLDQDLLSCLKYFINFFFYKFGLEICFLMAVNVIGQRMNFMVILHGCWLVAILTRRRREAIARLWPNYCLFLTLFLLYQYLLCLGMPPALCIDYPWRWSQAIPMNSALIKWLYLPDFFRAPNSTNLISDFLLLLCASQQWQVFSAEQTEEWQRMAGVNTDHLEPLRGEPNPIPNFIHCRSYLDMLKVAVFRYLFWLVLVVVFVTGATRISIFGLGYLLACFYLLLFGTTLLQKDTRAQLVLWDCLILYNVTVIISKNMLSLLSCVFVEQMQSNFCWVIQLFSLVCTVKGYYDPKEMKTRDRDCLLPVEEAGIIWDSICFFFLLLQRRVFLSHYFLHVSADLKATALQASRGFALYNAANIKNINFHRQTEERSLAQLKRQMKRIRAKQEKYRQSQASRGQLQSTDPQEPGPDSPGGSSPPRTQWWRPWQDHATVIHSGDYFLFESDSEEEEEALPEDPRPAAQSAFQMAYQAWVTNAQTVLRQRREQARRDRAEQLASGGDLSPEVELVDVPENEMAGHSHVMQRVLSTMQFLWVLGQATVDGLTRWLRTFTKDHRTMSDVLCAERYLLTQELLRGGEVHRGVLDQLYVSEDEIALSGPVENRDGPSTASSGLGAEEPLSSMTDDTGSPLSTGYNTRSGSEEIITDTGGLQAGTSLHGSQELLANARTRMRTASELLLDRRLRIPELEEAEQFEAQQGRTLRLLRAMYQCVAAHSELLCYFIIILNHMVTASAASLVLPVLVFLWAMLTIPRPSKRFWMTAIVFTEVMVVTKYLFQFGFFPWNSYIVLRRYENKPYFPPRILGLEKTDSYIKYDLVQLMALFFHRSQLLCYGLWDHEEDGVPKDHCRSSEKDQEAEEESEAKLESQPETGTGHPEEPVLTGTPKDHIQGKGSVRSKDEIQDPPEDLKPQHRRHISIRFRRRKETQGPKGAAVVEAEHEEGEEGREAAGRKRLRRPREGLKIREKMKAAGRRLQSFCLSLAQSFYQPLRRFFHDILHTKYRAATDVYALMFLADIVDIVVIIFGFWAFGKHSAATDIASSLSDDQVPQAFLFMLLVQFGTMVIDRALYLRKTVLGNLAFQVVLVVAIHLWMFFILPAVTERMFRQNAVAQLWYFVKCIYFALSAYQIRCGYPTRILGNFLTKKYNHLNLFLFQGFRLVPFLVELRAVMDWVWTDTTLSLSNWMCVEDIYANIFIIKCSRETEKKYPQPKGQKKKKIVKYGMGGLIILFLIAIIWFPLLFMSLIRSVVGVVNQPIDVTVTLKLGGYEPLFTMSAQQPSIVPFTPEDYEELSQQFDPYPLAMQFISQYSPEDIVTAQIEGSSGALWRISPPSRAQMKHELYNGTADITLRFTWNFQRDLAKGGSVEYTNEKHTLELAPNSTARRQLAQLLEGRPDQSVVIPHLFPKYIRAPNGPEANPVKQLQPDEEEDYLGVRIQLRREQVGTGTSGEQAGTKASDFLEWWVIELQDCQAECNLLPMVIFSDKVSPPSLGFLAGYGIVGLYVSIVLVVGKFVRGFFSDISHSIMFEELPCVDRILKLCQDIFLVRETRELELEEELYAKLIFLYRSPETMIKWTREKE.

A run of 3 helical transmembrane segments spans residues 13-25 (LLLP…ASLL), 29-44 (ALSL…LPWL), and 59-81 (LLRA…QICL). N-linked (GlcNAc...) asparagine glycosylation occurs at Asn100. The next 5 helical transmembrane spans lie at 122 to 138 (VAPD…CLGL), 193 to 212 (LLVT…AGIA), 215 to 234 (SAFS…WWSC), 246 to 266 (LCVM…CYQT), and 308 to 328 (WPIY…TSLL). Over residues 346-357 (DEEHELELDQLE) the composition is skewed to acidic residues. Residues 346 to 377 (DEEHELELDQLEPEPQARGTTQGATPTTTGPD) form a disordered region. A compositionally biased stretch (low complexity) spans 358–376 (PEPQARGTTQGATPTTTGP). A glycan (N-linked (GlcNAc...) asparagine) is linked at Asn380. Helical transmembrane passes span 416–436 (LILD…SIMY), 439–454 (WLTF…IWTV), 460–482 (LAML…RYVW), 510–527 (CLDL…WLLL), 572–592 (IYVK…SFAG), 594–614 (LVVY…LFQV), 625–646 (VFWW…TFQF), and 677–693 (LFSS…ACIL). At Ser749 the chain carries Phosphoserine. 12 helical membrane-spanning segments follow: residues 803 to 814 (LVALYTVWVALK), 818 to 831 (VMNL…AFAL), 846 to 860 (VWTC…LYQL), 913 to 940 (GYIQ…HYRR), 981 to 996 (GLEI…IGQR), 999 to 1014 (FMVI…ILTR), 1028 to 1043 (CLFL…LLCL), 1083 to 1104 (TNLI…VFSA), 1140 to 1166 (YLDM…TGAT), 1172 to 1190 (GLGY…TTLL), 1204 to 1222 (LILY…SLLS), and 1272 to 1288 (IWDS…RRVF). The stretch at 1325–1356 (HRQTEERSLAQLKRQMKRIRAKQEKYRQSQAS) forms a coiled coil. Disordered regions lie at residues 1345-1383 (AKQE…RTQW) and 1556-1597 (SGPV…NTRS). Polar residues predominate over residues 1352-1365 (QSQASRGQLQSTDP). A phosphoserine mark is found at Ser1372 and Ser1377. The segment covering 1579-1597 (SSMTDDTGSPLSTGYNTRS) has biased composition (polar residues). Ser1614, Ser1618, and Ser1633 each carry phosphoserine. 4 helical membrane-spanning segments follow: residues 1644-1687 (PELE…LNHM), 1692-1707 (AASL…WAML), 1716-1734 (FWMT…KYLF), and 1767-1788 (DSYI…SQLL). 2 stretches are compositionally biased toward basic and acidic residues: residues 1801–1811 (PKDHCRSSEKD) and 1842–1867 (PKDH…DLKP). The interval 1801-1911 (PKDHCRSSEK…GREAAGRKRL (111 aa)) is disordered. Basic residues predominate over residues 1868-1881 (QHRRHISIRFRRRK). 5 helical membrane passes run 1965–1984 (YALM…FGFW), 2005–2021 (PQAF…TMVI), 2036–2056 (AFQV…LPAV), 2065–2080 (AVAQ…YFAL), and 2181–2201 (GLII…MSLI). An intrachain disulfide couples Cys2425 to Cys2429. The helical transmembrane segment at 2446 to 2466 (LGFLAGYGIVGLYVSIVLVVG) threads the bilayer.

It belongs to the PIEZO (TC 1.A.75) family. Homotrimer; the homotrimer forms a propeller-shaped Piezo channel with a cation-ion conducting pore. Heterotrimeric interaction may occur between PIEZO1 and PIEZO2. Interacts with PKD2. Interacts with STOM13. Interacts with TMC1, TMC2, PCDH15 and CIB2; the interaction may be part of the MET complex. Interacts with MDFIC (via C-terminus); the interaction prolongs Piezo channel inactivation. Interacts with MDFI (via C-terminus); the interaction prolongs Piezo channel inactivation. In terms of tissue distribution, moderate expression in lung and kidney. Very weak expression in heart, spleen and liver.

The protein localises to the endoplasmic reticulum membrane. It is found in the endoplasmic reticulum-Golgi intermediate compartment membrane. Its subcellular location is the cell membrane. It localises to the cell projection. The protein resides in the lamellipodium membrane. The enzyme catalyses K(+)(in) = K(+)(out). It catalyses the reaction Na(+)(in) = Na(+)(out). The catalysed reaction is Ca(2+)(in) = Ca(2+)(out). It carries out the reaction Mg(2+)(in) = Mg(2+)(out). Regulated by auxillary subunits MDFIC and MDFI. Down-regulated by phosphatidylserines exposed on the cell surface. Divalent ions decrease the single-channel permeability of K(+). Its function is as follows. Pore-forming subunit of the mechanosensitive non-specific cation Piezo channel required for rapidly adapting mechanically activated (MA) currents and has a key role in sensing touch and tactile pain. Piezo channels are homotrimeric three-blade propeller-shaped structures that utilize a cap-motion and plug-and-latch mechanism to gate their ion-conducting pathways. Generates currents characterized by a linear current-voltage relationship that are sensitive to ruthenium red and gadolinium. Conductance to monovalent alkali ions is highest for K(+), intermediate for Na(+) and lowest for Li(+). Divalent ions except for Mn(2+) permeate the channel but more slowly than the monovalent ions and they also reduce K(+) currents. Plays a key role in epithelial cell adhesion by maintaining integrin activation through R-Ras recruitment to the ER, most probably in its activated state, and subsequent stimulation of calpain signaling. In inner ear hair cells, PIEZO1/2 subunits may constitute part of the mechanotransducer (MET) non-selective cation channel complex where they may act as pore-forming ion-conducting component in the complex. In the kidney, may contribute to the detection of intraluminal pressure changes and to urine flow sensing. Acts as a shear-stress sensor that promotes endothelial cell organization and alignment in the direction of blood flow through calpain activation. Plays a key role in blood vessel formation and vascular structure in both development and adult physiology. Acts as a sensor of phosphatidylserine (PS) flipping at the plasma membrane and governs morphogenesis of muscle cells. In myoblasts, flippase-mediated PS enrichment at the inner leaflet of plasma membrane triggers channel activation and Ca(2+) influx followed by Rho GTPases signal transduction, leading to assembly of cortical actomyosin fibers and myotube formation. In Rattus norvegicus (Rat), this protein is Piezo-type mechanosensitive ion channel component 1 (Piezo1).